Reading from the N-terminus, the 184-residue chain is UPF0149 protein PP_5201 (184 aa).

Belongs to the UPF0149 family.

This Pseudomonas putida (strain ATCC 47054 / DSM 6125 / CFBP 8728 / NCIMB 11950 / KT2440) protein is UPF0149 protein PP_5201.